The following is a 250-amino-acid chain: UPF0736 protein BPUM_1067 (250 aa).

Belongs to the UPF0736 family.

This Bacillus pumilus (strain SAFR-032) protein is UPF0736 protein BPUM_1067.